The primary structure comprises 422 residues: Vitamin D3 receptor B (422 aa).

The segment at residues 20–95 is a DNA-binding region (nuclear receptor); that stretch reads PRICGVCGDK…IGMMKEFILT (76 aa). 8 residues coordinate Zn(2+): Cys-23, Cys-26, Cys-40, Cys-43, Cys-59, Cys-65, Cys-75, and Cys-78. 2 consecutive NR C4-type zinc fingers follow at residues 23–43 and 59–78; these read CGVC…CEGC and CPFN…CQAC. Residues 96 to 125 are hinge; the sequence is DEEVQRKKELIQRRKDEEAHREAQKPRLSD. Positions 106-128 are disordered; the sequence is IQRRKDEEAHREAQKPRLSDEQR. The 293-residue stretch at 126 to 418 folds into the NR LBD domain; it reads EQRNIIDTLV…LTPLVLEVFG (293 aa). Residue Tyr-142 participates in calcitriol binding. The interval 145-190 is disordered; it reads SYSDFSRFRPPVREGPVTRSASRAASLHSLSDASSDSFSHSPESGD. A compositionally biased stretch (low complexity) spans 163 to 185; it reads RSASRAASLHSLSDASSDSFSHS. Ser-234 is a calcitriol binding site. Residues 243-261 are interaction with coactivator LXXLL motif; that stretch reads KMIPGFRELTAEDQIALLK. Calcitriol is bound by residues Arg-271, Ser-275, His-302, and His-392. A 9aaTAD motif is present at residues 411 to 419; that stretch reads PLVLEVFGG.

The protein belongs to the nuclear hormone receptor family. In terms of assembly, homodimer in the absence of bound vitamin D3. Heterodimer with RXRA after vitamin D3 binding. Interacts with ncoa1 and possibly other coactivators, leading to a strong increase of transcription of target genes. As to expression, detected in embryo 24 to 48 hours after fertilization, and in intestinal bulb.

The protein localises to the nucleus. The protein resides in the cytoplasm. Functionally, nuclear receptor for calcitriol, the active form of vitamin D3 which mediates the action of this vitamin on cells. Enters the nucleus upon vitamin D3 binding where it forms heterodimers with the retinoid X receptor/RXR. The VDR-RXR heterodimers bind to specific response elements on DNA and activate the transcription of vitamin D3-responsive target genes. Recruited to promoters via its interaction with BAZ1B/WSTF which mediates the interaction with acetylated histones, an essential step for VDR-promoter association. Plays a central role in calcium homeostasis. The sequence is that of Vitamin D3 receptor B (vdrb) from Danio rerio (Zebrafish).